We begin with the raw amino-acid sequence, 139 residues long: FAD synthase (139 aa).

Residues 9–10, 14–17, and Asp-92 each bind ATP; these read TF and HPGH.

This sequence belongs to the archaeal FAD synthase family. As to quaternary structure, homodimer. The cofactor is a divalent metal cation.

It catalyses the reaction FMN + ATP + H(+) = FAD + diphosphate. It participates in cofactor biosynthesis; FAD biosynthesis; FAD from FMN: step 1/1. In terms of biological role, catalyzes the transfer of the AMP portion of ATP to flavin mononucleotide (FMN) to produce flavin adenine dinucleotide (FAD) coenzyme. This Methanosarcina barkeri (strain Fusaro / DSM 804) protein is FAD synthase.